The sequence spans 476 residues: Cytoplasmic 60S subunit biogenesis factor ZNF622 (476 aa).

Ala-2 carries the N-acetylalanine modification. U1-type zinc fingers lie at residues 4 to 28 and 69 to 93; these read LTCI…TDWH and TYCT…SRRH. Residues 137-243 form a disordered region; sequence AIKAQPSTSP…AEDAAAEESP (107 aa). Over residues 167–177 the composition is skewed to basic and acidic residues; sequence VPERDPTEKPP. The segment covering 195 to 239 has biased composition (acidic residues); it reads EDGEEEGEEEEEDDEDEDWEDIDSDDGLECEDPGVEDQDAEDAAA. Ser-275 carries the post-translational modification Phosphoserine.

It belongs to the REI1 family. As to quaternary structure, homo- and heterodimer. Associates with pre-60S ribosomal particles. Interacts with MELK and MYBL2. Interacts with DNAJC21. Phosphorylated by MELK. The phosphorylation may redirect the protein to the nucleus. In terms of processing, ubiquitinated by HECTD1, leading to its degradation.

It localises to the cytoplasm. The protein resides in the nucleus. Functionally, pre-60S-associated cytoplasmic factor involved in the cytoplasmic maturation of the 60S subunit. The protein is Cytoplasmic 60S subunit biogenesis factor ZNF622 (Znf622) of Mus musculus (Mouse).